Reading from the N-terminus, the 299-residue chain is MWFKQISFYPLNKEKLPEADALADKLAEAEFTHCQGLDWFSEGFTAPVSFSPELVFPADFTLRVALKKEEKVLPAGVIRDILEEKVAEIQNNEARNVGRKEKQELKEQITDDLLPRAFTRSSRTEAVFNTRHGYLLVNNAASAKAENILTKLREALGGLEASLPNTKQSPSSLMTGWLLQGHCEGGFELDSDCELKGTGDIVPVVKVSKQDLTADEVVQHVKNGKTVTQLGLVWREQIAFILTQDFTLKRIQYLDVLQEEAESNGDDAAGLAFASQILMAESVSIMLEELVSYLGGWQD.

The protein belongs to the RdgC family.

It is found in the cytoplasm. The protein localises to the nucleoid. Functionally, may be involved in recombination. This Neisseria meningitidis serogroup C (strain 053442) protein is Recombination-associated protein RdgC.